A 717-amino-acid polypeptide reads, in one-letter code: Polyribonucleotide nucleotidyltransferase (717 aa).

Mg(2+) is bound by residues aspartate 486 and aspartate 492. The KH domain maps to 553 to 612 (PRMITVKINPEKIRDVIGKGGSTIQALTKETGCTIDIQEDGTITIASTSSEGMAEAKRRI). One can recognise an S1 motif domain in the interval 622 to 690 (GKIYSGTVLK…EKGRMRLSIK (69 aa)). The disordered stretch occupies residues 690–717 (KAAKAEEGDVPATAPQAPGAGDATSQQQ).

The protein belongs to the polyribonucleotide nucleotidyltransferase family. Requires Mg(2+) as cofactor.

It is found in the cytoplasm. It catalyses the reaction RNA(n+1) + phosphate = RNA(n) + a ribonucleoside 5'-diphosphate. Functionally, involved in mRNA degradation. Catalyzes the phosphorolysis of single-stranded polyribonucleotides processively in the 3'- to 5'-direction. In Ralstonia nicotianae (strain ATCC BAA-1114 / GMI1000) (Ralstonia solanacearum), this protein is Polyribonucleotide nucleotidyltransferase.